Here is a 386-residue protein sequence, read N- to C-terminus: Palmitoyltransferase ZDHHC18 (386 aa).

The segment at 1–65 (MKDCEYQQIS…GSGSLGRRPR (65 aa)) is disordered. Over 1–88 (MKDCEYQQIS…CGGRLMLAGH (88 aa)) the chain is Cytoplasmic. A Phosphoserine modification is found at serine 19. The segment covering 27–40 (PAAPPGPSPGPAPG) has biased composition (pro residues). Positions 49 to 59 (SGSGSGSGSGS) are enriched in gly residues. A helical membrane pass occupies residues 89-109 (GGVFALTLLLILSTTILFFIF). The Lumenal portion of the chain corresponds to 110–117 (DCPYLART). Residues 118-138 (LTLAIPIIAAILFFFVMSCLL) traverse the membrane as a helical segment. Topologically, residues 139–233 (QTSFTDPGIL…GNCVGRRNYR (95 aa)) are cytoplasmic. The 51-residue stretch at 190–240 (KYCFTCKMFRPPRTSHCSVCDNCVERFDHHCPWVGNCVGRRNYRFFYAFIL) folds into the DHHC domain. Cysteine 220 functions as the S-palmitoyl cysteine intermediate in the catalytic mechanism. A helical membrane pass occupies residues 234 to 254 (FFYAFILSLSFLTAFIFACVV). Residues 255 to 275 (THLTLLSQGSNFLSALNKTPA) lie on the Lumenal side of the membrane. The helical transmembrane segment at 276 to 296 (GVLELVICFFSIWSILGLSGF) threads the bilayer. Residues 297–386 (HTYLVASNLT…PDASMVGGHP (90 aa)) lie on the Cytoplasmic side of the membrane. A disordered region spans residues 362 to 386 (LPSPIRSDEPACGAKPDASMVGGHP).

The protein belongs to the DHHC palmitoyltransferase family. ERF2/ZDHHC9 subfamily.

The protein resides in the golgi apparatus membrane. It catalyses the reaction L-cysteinyl-[protein] + hexadecanoyl-CoA = S-hexadecanoyl-L-cysteinyl-[protein] + CoA. Palmitoyltransferase that catalyzes the addition of palmitate onto various protein substrates, such as CGAS, HRAS and LCK. Acts as a negative regulator of the cGAS-STING pathway be mediating palmitoylation and inactivation of CGAS. May also have a palmitoyltransferase activity toward the beta-2 adrenergic receptor/ADRB2 and therefore regulate G protein-coupled receptor signaling. In Rattus norvegicus (Rat), this protein is Palmitoyltransferase ZDHHC18.